The following is a 519-amino-acid chain: NADH-quinone oxidoreductase subunit N (519 aa).

Transmembrane regions (helical) follow at residues 14–34 (LLPA…EVFL), 44–64 (AVLT…TMFE), 82–102 (FLTF…VSFL), 117–137 (LFAS…TLFV), 167–187 (FILG…LYGA), 209–229 (GLVY…VAAV), 249–269 (LMSV…FFMV), 278–298 (LLGL…LLAI), 307–327 (LAYS…ALFV), 359–379 (ILYY…IVSV), 407–427 (WAFA…TIGF), 431–451 (LLIF…VGVL), and 487–507 (LALV…GPIM).

This sequence belongs to the complex I subunit 2 family. As to quaternary structure, NDH-1 is composed of 14 different subunits. Subunits NuoA, H, J, K, L, M, N constitute the membrane sector of the complex.

It localises to the cell inner membrane. The enzyme catalyses a quinone + NADH + 5 H(+)(in) = a quinol + NAD(+) + 4 H(+)(out). Its function is as follows. NDH-1 shuttles electrons from NADH, via FMN and iron-sulfur (Fe-S) centers, to quinones in the respiratory chain. The immediate electron acceptor for the enzyme in this species is believed to be ubiquinone. Couples the redox reaction to proton translocation (for every two electrons transferred, four hydrogen ions are translocated across the cytoplasmic membrane), and thus conserves the redox energy in a proton gradient. This is NADH-quinone oxidoreductase subunit N from Myxococcus xanthus (strain DK1622).